A 197-amino-acid polypeptide reads, in one-letter code: Probable nicotinate-nucleotide adenylyltransferase (197 aa).

This sequence belongs to the NadD family.

It carries out the reaction nicotinate beta-D-ribonucleotide + ATP + H(+) = deamido-NAD(+) + diphosphate. The protein operates within cofactor biosynthesis; NAD(+) biosynthesis; deamido-NAD(+) from nicotinate D-ribonucleotide: step 1/1. Functionally, catalyzes the reversible adenylation of nicotinate mononucleotide (NaMN) to nicotinic acid adenine dinucleotide (NaAD). In Porphyromonas gingivalis (strain ATCC 33277 / DSM 20709 / CIP 103683 / JCM 12257 / NCTC 11834 / 2561), this protein is Probable nicotinate-nucleotide adenylyltransferase.